Reading from the N-terminus, the 578-residue chain is Acyl-CoA ligase AFT1-1 (578 aa).

ATP-binding positions include 210 to 218, 350 to 355, D438, R457, and K554; these read SSGTSGAQK and QCYGAT. An SBD1 region spans residues 281-350; that stretch reads GVEDLLSIVE…RHHPTWKIKQ (70 aa). The tract at residues 351-413 is SBD2; sequence CYGATEAGTA…VSSPSLAIGY (63 aa). A Peroxisomal targeting signal type 1 motif is present at residues 576–578; sequence SKI.

The protein belongs to the ATP-dependent AMP-binding enzyme family.

It localises to the peroxisome. The protein operates within mycotoxin biosynthesis. In terms of biological role, acyl-CoA ligase; part of the gene clusters that mediate the biosynthesis of the host-selective toxins (HSTs) AF-toxins responsible for Alternaria black spot of strawberry disease by the strawberry pathotype. AF-toxin I and III are valine derivatives of 2,3-dyhydroxy-isovaleric acid and 2-hydroxy-isovaleric acid respectively, while AF II is an isoleucine derivative of 2-hydroxy-valeric acid. These derivatives are bound to a 9,10-epoxy-8-hydroxy-9-methyl-decatrienoic acid (EDA) moiety. On cellular level, AF-toxins affect plasma membrane of susceptible cells and cause a sudden increase in loss of K(+) after a few minutes of toxin treatment. The aldo-keto reductase AFTS1 catalyzes the conversion of 2-keto-isovaleric acid (2-KIV) to 2-hydroxy-isovaleric acid (2-HIV) by reduction of its ketone to an alcohol. The acyl-CoA ligase AFT1, the hydrolase AFT2 and the enoyl-CoA hydratases AFT3 and AFT6, but also the polyketide synthase AFT9, the acyl-CoA dehydrogenase AFT10, the cytochrome P450 monooxygenase AFT11 and the oxidoreductase AFT12 are all involved in the biosynthesis of the AK-, AF- and ACT-toxin common EDA structural moiety. The exact role of each enzyme, and of additional enzymes identified within the AF-toxin clusters have still to be determined. This Alternaria alternata (Alternaria rot fungus) protein is Acyl-CoA ligase AFT1-1.